We begin with the raw amino-acid sequence, 282 residues long: Deoxyribonuclease-1 (282 aa).

The signal sequence occupies residues 1–22; the sequence is MRGMKLLGALLALAALLQGAVS. Asn-40 carries N-linked (GlcNAc...) asparagine glycosylation. Glu-100 is an active-site residue. A disulfide bond links Cys-123 and Cys-126. The N-linked (GlcNAc...) asparagine glycan is linked to Asn-128. His-156 is an active-site residue. An intrachain disulfide couples Cys-195 to Cys-231.

Belongs to the DNase I family. It depends on Ca(2+) as a cofactor. Mg(2+) serves as cofactor. As to expression, principally in tissues of the digestive system. Highest levels found in urine, but also relatively abundant in semen and saliva.

The protein resides in the secreted. It localises to the zymogen granule. It is found in the nucleus envelope. It carries out the reaction Endonucleolytic cleavage to 5'-phosphodinucleotide and 5'-phosphooligonucleotide end-products.. Functionally, serum endocuclease secreted into body fluids by a wide variety of exocrine and endocrine organs. Expressed by non-hematopoietic tissues and preferentially cleaves protein-free DNA. Among other functions, seems to be involved in cell death by apoptosis. Binds specifically to G-actin and blocks actin polymerization. Together with DNASE1L3, plays a key role in degrading neutrophil extracellular traps (NETs). NETs are mainly composed of DNA fibers and are released by neutrophils to bind pathogens during inflammation. Degradation of intravascular NETs by DNASE1 and DNASE1L3 is required to prevent formation of clots that obstruct blood vessels and cause organ damage following inflammation. This chain is Deoxyribonuclease-1, found in Homo sapiens (Human).